The primary structure comprises 71 residues: Antimicrobial peptide VpCT4 (71 aa).

The N-terminal stretch at M1–A23 is a signal peptide. L39 is modified (leucine amide). Positions G40 to R71 are excised as a propeptide.

The protein belongs to the non-disulfide-bridged peptide (NDBP) superfamily. Short antimicrobial peptide (group 4) family. In terms of tissue distribution, expressed by the venom gland.

Its subcellular location is the secreted. The protein localises to the target cell membrane. Its function is as follows. Antimicrobial peptide with potent activity against bacteria S.aureus (MIC=9.3 uM), weak activity against E.coli (MIC&gt;100 uM), and weak activity against pathogenic yeasts C.albicans (MIC=100 uM) and C.glabrata (MIC=100 uM). Is not very effective against P.aeruginosa (MIC&gt;300 uM). Also provokes high hemolysis on human erythrocytes (HC(50)=4.8 uM). This is Antimicrobial peptide VpCT4 from Mesomexovis punctatus (Scorpion).